Consider the following 101-residue polypeptide: Apolipoprotein C-II (101 aa).

Positions 1-26 (MGTRYFLALFLILLVLGFKVQGVAMA) are cleaved as a signal peptide. The lipid binding stretch occupies residues 66–74 (TMDEKIRDI). The interval 78–101 (STAAVTTYAGIFTDQLLSLLKGDQ) is lipoprotein lipase cofactor.

This sequence belongs to the apolipoprotein C2 family. Proapolipoprotein C-II is synthesized as a sialic acid containing glycoprotein which is subsequently desialylated prior to its proteolytic processing. In terms of processing, proapolipoprotein C-II undergoes proteolytic cleavage of its N-terminal hexapeptide to generate apolipoprotein C-II. In bovine, proapolipoprotein C-II was found to be the minor form whereas apolipoprotein C-II was found to be the major form in plasma.

The protein localises to the secreted. Component of chylomicrons, very low-density lipoproteins (VLDL), low-density lipoproteins (LDL), and high-density lipoproteins (HDL) in plasma. Plays an important role in lipoprotein metabolism as an activator of lipoprotein lipase. Both proapolipoprotein C-II and apolipoprotein C-II can activate lipoprotein lipase. This Camelus dromedarius (Dromedary) protein is Apolipoprotein C-II (APOC2).